The chain runs to 1162 residues: Isoleucine--tRNA ligase (1162 aa).

The 'HIGH' region signature appears at 50–60; the sequence is PSANGMPGIHH. The short motif at 710–714 is the 'KMSKS' region element; sequence KMSKR. K713 provides a ligand contact to ATP.

The protein belongs to the class-I aminoacyl-tRNA synthetase family. IleS type 2 subfamily. Monomer. Requires Zn(2+) as cofactor.

The protein localises to the cytoplasm. The enzyme catalyses tRNA(Ile) + L-isoleucine + ATP = L-isoleucyl-tRNA(Ile) + AMP + diphosphate. Catalyzes the attachment of isoleucine to tRNA(Ile). As IleRS can inadvertently accommodate and process structurally similar amino acids such as valine, to avoid such errors it has two additional distinct tRNA(Ile)-dependent editing activities. One activity is designated as 'pretransfer' editing and involves the hydrolysis of activated Val-AMP. The other activity is designated 'posttransfer' editing and involves deacylation of mischarged Val-tRNA(Ile). The chain is Isoleucine--tRNA ligase from Bacteroides thetaiotaomicron (strain ATCC 29148 / DSM 2079 / JCM 5827 / CCUG 10774 / NCTC 10582 / VPI-5482 / E50).